The primary structure comprises 178 residues: Translation initiation factor IF-3 (178 aa).

Residues Met1 to Asp20 are disordered.

This sequence belongs to the IF-3 family. Monomer.

The protein localises to the cytoplasm. In terms of biological role, IF-3 binds to the 30S ribosomal subunit and shifts the equilibrium between 70S ribosomes and their 50S and 30S subunits in favor of the free subunits, thus enhancing the availability of 30S subunits on which protein synthesis initiation begins. The sequence is that of Translation initiation factor IF-3 from Mesorhizobium japonicum (strain LMG 29417 / CECT 9101 / MAFF 303099) (Mesorhizobium loti (strain MAFF 303099)).